We begin with the raw amino-acid sequence, 794 residues long: Zinc finger protein 148 (794 aa).

A Glycyl lysine isopeptide (Lys-Gly) (interchain with G-Cter in SUMO2) cross-link involves residue Lys-6. Residue Ser-51 is modified to Phosphoserine. Glycyl lysine isopeptide (Lys-Gly) (interchain with G-Cter in SUMO2) cross-links involve residues Lys-88, Lys-115, and Lys-132. The segment at 171–193 (HVCEHCNAAFRTNYHLQRHVFIH) adopts a C2H2-type 1 zinc-finger fold. At Thr-194 the chain carries Phosphothreonine. C2H2-type zinc fingers lie at residues 199–221 (FQCS…EKIH) and 227–249 (FRCD…KRTH). Ser-250 carries the phosphoserine modification. The C2H2-type 4 zinc finger occupies 255–278 (YQCEYCLQYFSRTDRVLKHKRMCH). Lys-291 participates in a covalent cross-link: Glycyl lysine isopeptide (Lys-Gly) (interchain with G-Cter in SUMO2). Residues 298 to 336 (EEDSGFSTSPKDNSLPKKKRQKTEKKSSGMDKESALDKS) form a disordered region. Residues Ser-301 and Ser-306 each carry the phosphoserine modification. Lys-308 participates in a covalent cross-link: Glycyl lysine isopeptide (Lys-Gly) (interchain with G-Cter in SUMO2). The span at 321-336 (EKKSSGMDKESALDKS) shows a compositional bias: basic and acidic residues. Lys-356 participates in a covalent cross-link: Glycyl lysine isopeptide (Lys-Gly) (interchain with G-Cter in SUMO1); alternate. Lys-356 participates in a covalent cross-link: Glycyl lysine isopeptide (Lys-Gly) (interchain with G-Cter in SUMO2); alternate. Lys-402 participates in a covalent cross-link: Glycyl lysine isopeptide (Lys-Gly) (interchain with G-Cter in SUMO2). Ser-412 carries the post-translational modification Phosphoserine. Residues Lys-421 and Lys-424 each participate in a glycyl lysine isopeptide (Lys-Gly) (interchain with G-Cter in SUMO2) cross-link. Polar residues predominate over residues 574–588 (NSSEVPEVTPSENVG). The tract at residues 574 to 596 (NSSEVPEVTPSENVGSSSQASSS) is disordered. Position 607 is an N6-acetyllysine (Lys-607). Phosphoserine is present on residues Ser-665 and Ser-784.

This sequence belongs to the krueppel C2H2-type zinc-finger protein family. As to quaternary structure, interacts with HNRNPDL. Interacts with the 5FMC complex; the interaction requires association with CHTOP. Interacts with CAVIN1. Post-translationally, sumoylated with SUMO2. Desumoylated by SENP3, resulting in the stimulation of transcription of its target genes.

The protein localises to the nucleus. In terms of biological role, involved in transcriptional regulation. Represses the transcription of a number of genes including gastrin, stromelysin and enolase. Binds to the G-rich box in the enhancer region of these genes. The polypeptide is Zinc finger protein 148 (ZNF148) (Homo sapiens (Human)).